Reading from the N-terminus, the 280-residue chain is Diaminopimelate epimerase (280 aa).

The substrate site is built by Asn-14 and Asn-67. Catalysis depends on Cys-76, which acts as the Proton donor. Substrate-binding positions include 77-78, Asn-193, and 210-211; these read GN and ER. The Proton acceptor role is filled by Cys-220. A substrate-binding site is contributed by 221-222; that stretch reads GT.

The protein belongs to the diaminopimelate epimerase family. Homodimer.

The protein resides in the cytoplasm. It catalyses the reaction (2S,6S)-2,6-diaminopimelate = meso-2,6-diaminopimelate. It participates in amino-acid biosynthesis; L-lysine biosynthesis via DAP pathway; DL-2,6-diaminopimelate from LL-2,6-diaminopimelate: step 1/1. Its function is as follows. Catalyzes the stereoinversion of LL-2,6-diaminopimelate (L,L-DAP) to meso-diaminopimelate (meso-DAP), a precursor of L-lysine. The chain is Diaminopimelate epimerase from Methanocella arvoryzae (strain DSM 22066 / NBRC 105507 / MRE50).